Reading from the N-terminus, the 218-residue chain is Large ribosomal subunit protein uL4 (218 aa).

The segment at 55-83 (THATKTRGMVSGGGKKPWKQKGTGRARQG) is disordered.

It belongs to the universal ribosomal protein uL4 family. As to quaternary structure, part of the 50S ribosomal subunit.

Its function is as follows. One of the primary rRNA binding proteins, this protein initially binds near the 5'-end of the 23S rRNA. It is important during the early stages of 50S assembly. It makes multiple contacts with different domains of the 23S rRNA in the assembled 50S subunit and ribosome. Functionally, forms part of the polypeptide exit tunnel. The polypeptide is Large ribosomal subunit protein uL4 (Bifidobacterium longum (strain DJO10A)).